Consider the following 109-residue polypeptide: uncharacterized protein (109 aa).

Residues 26-48 traverse the membrane as a helical segment; sequence VTSIMTVSDINYLLLYLIILLTL.

The protein localises to the membrane. This is an uncharacterized protein from Saccharomyces cerevisiae (strain ATCC 204508 / S288c) (Baker's yeast).